The following is a 330-amino-acid chain: Membrane progestin receptor gamma (330 aa).

The Cytoplasmic segment spans residues 1–51 (MLSLKLPRLFRIDQVPQVFHEQGILFGYRHPQSSATACILSLFQMTNETLN). Residues 52-72 (IWTHLLPFWFFVWRFMTALYV) form a helical membrane-spanning segment. At 73 to 81 (TDIQNDSYS) the chain is on the extracellular side. A helical transmembrane segment spans residues 82–101 (WPMLVYMCTSCVYPLASSCA). The Cytoplasmic segment spans residues 102-113 (HTFSSMSKNARH). A helical transmembrane segment spans residues 114–134 (ICYFLDYGAVNLFSLGSAIAY). At 135 to 141 (SAYTFPD) the chain is on the extracellular side. Residues 142 to 162 (ALVCSTFHECYVALAVLNTIL) traverse the membrane as a helical segment. Topologically, residues 163 to 186 (STGLSCYSRFLELQKPRLCKLLRV) are cytoplasmic. The chain crosses the membrane as a helical span at residues 187 to 207 (LAFAYPYTWDSLPIFYRLFLF). The Extracellular segment spans residues 208–253 (PGESSRNEAMLYHQKHMGMTLLASFFYSAHLPERLAPGRFDYIGHS). Residues 254-274 (HQLFHVCVILATHLQMEAILL) form a helical membrane-spanning segment. The Cytoplasmic segment spans residues 275-294 (DKTLRREWLLATSRPFSFPQ). Residues 295–315 (IAAAMLLCIIFSLSNIIYFSA) form a helical membrane-spanning segment. Over 316–330 (ALYRIPEPELHEKET) the chain is Extracellular.

It belongs to the ADIPOR family.

It is found in the cell membrane. Functionally, plasma membrane progesterone (P4) receptor coupled to G proteins. Seems to act through a G(i) mediated pathway. May be involved in oocyte maturation. This chain is Membrane progestin receptor gamma, found in Mus musculus (Mouse).